A 188-amino-acid polypeptide reads, in one-letter code: Scytalone dehydratase (188 aa).

Residues tyrosine 27, tyrosine 47, and phenylalanine 50 each contribute to the substrate site. Catalysis depends on residues histidine 82 and histidine 107. Asparagine 128 serves as a coordination point for substrate.

Belongs to the scytalone dehydratase family. As to quaternary structure, homotrimer. Each subunit contains an active site, located in the central part of the hydrophobic core of the monomer, which functions independently.

It localises to the endosome. The catalysed reaction is scytalone = 1,3,8-trihydroxynaphthalene + H2O. It functions in the pathway pigment biosynthesis; melanin biosynthesis. Carpropamid acts as an efficient inhibitor of scytalone dehydratase activity. Its function is as follows. Scytalone dehydratase; part of the gene cluster that mediates the biosynthesis of dihydroxynaphthalene (DHN)-melanin, a bluish-green pigment and a structural component of the conidial wall. Within the pathway, catalyzes the dehydration of scytalone as well as of vermelone. This Colletotrichum orbiculare (strain 104-T / ATCC 96160 / CBS 514.97 / LARS 414 / MAFF 240422) (Cucumber anthracnose fungus) protein is Scytalone dehydratase.